The following is a 294-amino-acid chain: ATP phosphoribosyltransferase (294 aa).

The protein belongs to the ATP phosphoribosyltransferase family. Long subfamily. Mg(2+) is required as a cofactor.

The protein localises to the cytoplasm. It carries out the reaction 1-(5-phospho-beta-D-ribosyl)-ATP + diphosphate = 5-phospho-alpha-D-ribose 1-diphosphate + ATP. It participates in amino-acid biosynthesis; L-histidine biosynthesis; L-histidine from 5-phospho-alpha-D-ribose 1-diphosphate: step 1/9. With respect to regulation, feedback inhibited by histidine. Catalyzes the condensation of ATP and 5-phosphoribose 1-diphosphate to form N'-(5'-phosphoribosyl)-ATP (PR-ATP). Has a crucial role in the pathway because the rate of histidine biosynthesis seems to be controlled primarily by regulation of HisG enzymatic activity. The protein is ATP phosphoribosyltransferase of Chlorobaculum parvum (strain DSM 263 / NCIMB 8327) (Chlorobium vibrioforme subsp. thiosulfatophilum).